The sequence spans 352 residues: Isopentenyl-diphosphate delta-isomerase (352 aa).

Substrate is bound at residue 6 to 7 (RK). Residues 63–65 (AMT), Ser-93, and Asn-122 each bind FMN. 93-95 (SQR) lines the substrate pocket. Substrate is bound at residue Gln-160. Glu-161 contributes to the Mg(2+) binding site. FMN contacts are provided by residues Lys-192, Thr-221, 271–273 (GIR), and 292–293 (SQ).

This sequence belongs to the IPP isomerase type 2 family. As to quaternary structure, homooctamer. Dimer of tetramers. FMN is required as a cofactor. It depends on NADPH as a cofactor. Requires Mg(2+) as cofactor.

It localises to the cytoplasm. The catalysed reaction is isopentenyl diphosphate = dimethylallyl diphosphate. Functionally, involved in the biosynthesis of isoprenoids. Catalyzes the 1,3-allylic rearrangement of the homoallylic substrate isopentenyl (IPP) to its allylic isomer, dimethylallyl diphosphate (DMAPP). In Pyrobaculum aerophilum (strain ATCC 51768 / DSM 7523 / JCM 9630 / CIP 104966 / NBRC 100827 / IM2), this protein is Isopentenyl-diphosphate delta-isomerase.